The following is a 132-amino-acid chain: MHSLSWFLLVIGLSVGLSSGKWNEKNSVIFTNSLGRNKVLKVNCISNDDNLGFHFLRHGQTYDFSFHDSLFKSEFYCDLWQGPNFKLHAAFTAYEGGGLIVHYGKKNFWDVRDDGIYFTHGQKMPKLEYTWK.

The signal sequence occupies residues 1–20 (MHSLSWFLLVIGLSVGLSSG).

This sequence belongs to the plant self-incompatibility (S1) protein family. As to expression, mostly expressed in seedlings, stems, leaves and floral tissues, and, to a lower extent, in roots.

The protein resides in the secreted. This is S-protein homolog 8 from Arabidopsis thaliana (Mouse-ear cress).